Reading from the N-terminus, the 471-residue chain is V-type ATP synthase beta chain (471 aa).

The protein belongs to the ATPase alpha/beta chains family.

Produces ATP from ADP in the presence of a proton gradient across the membrane. The V-type beta chain is a regulatory subunit. The sequence is that of V-type ATP synthase beta chain from Streptococcus pyogenes serotype M12 (strain MGAS2096).